Reading from the N-terminus, the 231-residue chain is Sensory transduction protein BceR (231 aa).

Residues 3 to 116 (KIMLIEDDHT…VLVAKIQAIL (114 aa)) enclose the Response regulatory domain. Asp-52 carries the 4-aspartylphosphate modification. The segment at residues 127-225 (TQLKTWCGAT…KVGQGYMAKE (99 aa)) is a DNA-binding region (ompR/PhoB-type).

Phosphorylated by BceS.

The protein resides in the cytoplasm. Its function is as follows. Member of the two-component regulatory system BceS/BceR involved in the regulation of bacitracin resistance. When activated by BceS, binds to the upstream region of the bceAB promoter and up-regulates the expression of these two genes. The chain is Sensory transduction protein BceR (bceR) from Halalkalibacterium halodurans (strain ATCC BAA-125 / DSM 18197 / FERM 7344 / JCM 9153 / C-125) (Bacillus halodurans).